The primary structure comprises 487 residues: Cysteine--tRNA ligase (487 aa).

Cysteine 27 lines the Zn(2+) pocket. The short motif at 29–39 (ATVQGLPHVGH) is the 'HIGH' region element. A disordered region spans residues 174–194 (IDDMQGAPDADPRGKKDPRDF). Over residues 183-194 (ADPRGKKDPRDF) the composition is skewed to basic and acidic residues. Residues cysteine 225, histidine 250, and glutamate 254 each coordinate Zn(2+). A 'KMSKS' region motif is present at residues 281–285 (KMSKS). ATP is bound at residue lysine 284.

This sequence belongs to the class-I aminoacyl-tRNA synthetase family. As to quaternary structure, monomer. It depends on Zn(2+) as a cofactor.

It localises to the cytoplasm. The catalysed reaction is tRNA(Cys) + L-cysteine + ATP = L-cysteinyl-tRNA(Cys) + AMP + diphosphate. In Arthrobacter sp. (strain FB24), this protein is Cysteine--tRNA ligase.